Here is a 138-residue protein sequence, read N- to C-terminus: Lutropin subunit beta (138 aa).

The first 19 residues, 1–19 (RYQELTVLLLLLLEGGSWG), serve as a signal peptide directing secretion. 6 disulfide bridges follow: Cys-27–Cys-75, Cys-41–Cys-90, Cys-44–Cys-128, Cys-52–Cys-106, Cys-56–Cys-108, and Cys-111–Cys-118. Residue Asn-31 is glycosylated (N-linked (GlcNAc...) asparagine).

The protein belongs to the glycoprotein hormones subunit beta family. As to quaternary structure, heterodimer of a common alpha chain and a unique beta chain which confers biological specificity to thyrotropin, lutropin, follitropin and gonadotropin.

It localises to the secreted. Functionally, promotes spermatogenesis and ovulation by stimulating the testes and ovaries to synthesize steroids. This is Lutropin subunit beta (LHB) from Osphranter rufus (Red kangaroo).